We begin with the raw amino-acid sequence, 485 residues long: MLGPPSREKWSSDFPRWFDWVIETAEVYDYGRYPVKGMGVWMPYGFQIRRRVLEVVRGLLDSTGHEEVLFPLLIPEHLLRRESEHIRGFEGEVYWVTHGGREELDVKLALRPTSETSITYMETFWIKSYRQLPKKYYQVVSIFRYETKATRPMIRLREVTTFKEAHTVHESFEDAERQVLEAIEVYKAIFDRLLIPYVISKRPEWDKFAGALYTIAFDTIMPDGRALQIGTVHHLGQSFTRAFDFRIQMRDERLDHPWQTSYGVSDRVVASLIAVHGDDRGLVIPPSVAPIQVVVIPITPGDEEKRGKVLTYTAKAAEALEKAGLRVHVDDREWERPGAKFYYWEAKGVPIRVEIGLREAEQDTLTIARRDTLEKTEVPLGEAGNRIRELMAQIESSMRERAKSFFGERLLRTESLEEARDWVEGRRGIAEIPWCGRESCGLEMEERVNGKVLGTPWPEEPVEEGKRCPLCGRPAVAWIRLAKTY.

It belongs to the class-II aminoacyl-tRNA synthetase family. ProS type 3 subfamily. In terms of assembly, homodimer.

Its subcellular location is the cytoplasm. The enzyme catalyses tRNA(Pro) + L-proline + ATP = L-prolyl-tRNA(Pro) + AMP + diphosphate. In terms of biological role, catalyzes the attachment of proline to tRNA(Pro) in a two-step reaction: proline is first activated by ATP to form Pro-AMP and then transferred to the acceptor end of tRNA(Pro). The sequence is that of Proline--tRNA ligase from Aeropyrum pernix (strain ATCC 700893 / DSM 11879 / JCM 9820 / NBRC 100138 / K1).